Here is an 883-residue protein sequence, read N- to C-terminus: MQMDRKTQIIDYDGNMIADLKEWMIRNKLANLGFNYNVVAILGSQSSGKSTLLNNLFKTSFDVMNTKLGHSQTTQGLWLSFDTFEESPVSPLEKGNSTTPINPTLILDVEGNDSKERGDNRLTFEHRSALFSLALADCLIVNLWYHSLGNFTASNYGLLKTVMEVNLELFQQDKNCPKTILLFTVRDWFEEFASIDIVKNKIVEEYLNKIWAEMKKPPSAKKANINNYFIVEVVGLSHAIIKKTEFLNDVENLRKKWINELRPLQYSRNIPSDGFAHYCNNIWNTIVKQSQLDIPSQKEMLATFRCQEIKNNVISNTSKMIKEKLTASSSQPTSASIDEFKSWAEKDIVEKSLDEYFVDASRYTESICLKTSEELLESLFIQLQTIVDNNLNFTQRVLSAKFANELNTMYSVCTSDKNVFLFSKESNLQVHKDGNGSNSSKEDKKDENTSQDKCIRLWSSFLSNADKLEYITFCNFFESYQKCNIEIRKKNKIHEFNYKPSLNILLTSICKDMNRIRNTQFTVLLERTRATIKSRFKNMDNLLITTKNPEEYWNHTLKIVKALQESINNNLTKCFINLKGGGPGSSVAGISNELFDHDEDNTFHVDSPSEGHRSISDNRTAHENKHYVDENLLNYKKIDIIKNKGKYISSVSEEIDKQIKNKKAISELNNYYLDEIMDVLKSKLDEISDNLSSIIIQRFESVFNYDDAEQPRHWREISMAELKKIFRESKNYAFLIIDILQKNIKVELIDDYLPNNFIKDEVIEKGKNKAKRKIQEICRDAQYIQETGGKMSLKNVPLFFWVILLILGWNELLFFIRFFFRLNIILPLFLAAAVILSTLFFNGNMEVLSTINKVVFFLAKSSFGFYRQLQTMGEKVAQVPTAD.

The Cytoplasmic portion of the chain corresponds to 1–795 (MQMDRKTQII…ETGGKMSLKN (795 aa)). A GB1/RHD3-type G domain is found at 33 to 279 (GFNYNVVAIL…IPSDGFAHYC (247 aa)). 43-50 (GSQSSGKS) contacts GTP. A coiled-coil region spans residues 673–693 (LDEIMDVLKSKLDEISDNLSS). A helical membrane pass occupies residues 796-816 (VPLFFWVILLILGWNELLFFI). Topologically, residues 817-819 (RFF) are lumenal. The chain crosses the membrane as a helical span at residues 820–840 (FRLNIILPLFLAAAVILSTLF). Topologically, residues 841 to 883 (FNGNMEVLSTINKVVFFLAKSSFGFYRQLQTMGEKVAQVPTAD) are cytoplasmic.

This sequence belongs to the TRAFAC class dynamin-like GTPase superfamily. GB1/RHD3 GTPase family. RHD3 subfamily.

It localises to the endoplasmic reticulum membrane. Functionally, probable GTP-binding protein involved in generating and maintaining the structure of the tubular endoplasmic reticulum network. The polypeptide is Protein SEY1 homolog (Plasmodium knowlesi (strain H)).